Reading from the N-terminus, the 127-residue chain is Aspartate 1-decarboxylase (127 aa).

Ser-25 functions as the Schiff-base intermediate with substrate; via pyruvic acid in the catalytic mechanism. Pyruvic acid (Ser) is present on Ser-25. Thr-57 contributes to the substrate binding site. The Proton donor role is filled by Tyr-58. 73–75 contributes to the substrate binding site; sequence GAA.

Belongs to the PanD family. As to quaternary structure, heterooctamer of four alpha and four beta subunits. The cofactor is pyruvate. In terms of processing, is synthesized initially as an inactive proenzyme, which is activated by self-cleavage at a specific serine bond to produce a beta-subunit with a hydroxyl group at its C-terminus and an alpha-subunit with a pyruvoyl group at its N-terminus.

The protein resides in the cytoplasm. It carries out the reaction L-aspartate + H(+) = beta-alanine + CO2. The protein operates within cofactor biosynthesis; (R)-pantothenate biosynthesis; beta-alanine from L-aspartate: step 1/1. Its function is as follows. Catalyzes the pyruvoyl-dependent decarboxylation of aspartate to produce beta-alanine. The polypeptide is Aspartate 1-decarboxylase (Staphylococcus carnosus (strain TM300)).